A 79-amino-acid chain; its full sequence is Small ribosomal subunit protein bS18 (79 aa).

The protein belongs to the bacterial ribosomal protein bS18 family. As to quaternary structure, part of the 30S ribosomal subunit. Forms a tight heterodimer with protein bS6.

Its function is as follows. Binds as a heterodimer with protein bS6 to the central domain of the 16S rRNA, where it helps stabilize the platform of the 30S subunit. The polypeptide is Small ribosomal subunit protein bS18 (Streptococcus pneumoniae (strain Hungary19A-6)).